Here is a 543-residue protein sequence, read N- to C-terminus: CTP synthase (543 aa).

The segment at 1–265 (MTRYIFVTGG…DDYVVERFGL (265 aa)) is amidoligase domain. Residue S13 participates in CTP binding. S13 serves as a coordination point for UTP. ATP is bound by residues 14-19 (SLGKGI) and D71. Residues D71 and E139 each contribute to the Mg(2+) site. CTP contacts are provided by residues 146 to 148 (DIE), 186 to 191 (KTKPTQ), and K222. Residues 186–191 (KTKPTQ) and K222 contribute to the UTP site. Residues 290-541 (NIAMVGKYME…VNAALEYKAK (252 aa)) form the Glutamine amidotransferase type-1 domain. Position 351 (G351) interacts with L-glutamine. The active-site Nucleophile; for glutamine hydrolysis is the C378. Residues 379 to 382 (LGMQ), E402, and R469 each bind L-glutamine. Catalysis depends on residues H514 and E516.

Belongs to the CTP synthase family. Homotetramer.

The catalysed reaction is UTP + L-glutamine + ATP + H2O = CTP + L-glutamate + ADP + phosphate + 2 H(+). It carries out the reaction L-glutamine + H2O = L-glutamate + NH4(+). The enzyme catalyses UTP + NH4(+) + ATP = CTP + ADP + phosphate + 2 H(+). Its pathway is pyrimidine metabolism; CTP biosynthesis via de novo pathway; CTP from UDP: step 2/2. Allosterically activated by GTP, when glutamine is the substrate; GTP has no effect on the reaction when ammonia is the substrate. The allosteric effector GTP functions by stabilizing the protein conformation that binds the tetrahedral intermediate(s) formed during glutamine hydrolysis. Inhibited by the product CTP, via allosteric rather than competitive inhibition. Catalyzes the ATP-dependent amination of UTP to CTP with either L-glutamine or ammonia as the source of nitrogen. Regulates intracellular CTP levels through interactions with the four ribonucleotide triphosphates. The protein is CTP synthase of Stutzerimonas stutzeri (strain A1501) (Pseudomonas stutzeri).